Here is a 2614-residue protein sequence, read N- to C-terminus: MSLTLKIQIVRDKQVKAMKFSPTQTVAEVCAQVREKINETSGDDHGLFQPGIDAKRPSRWLKMDKTLQFYDLKINDELDYKKKHRPLKVRLMDETVKTMLVDDSLTAGEILEIIGKRIGIKNYEEFSLQTEGAAAGEWINHAQPLHEQGVPDDAVVLLKKKFFVDDFNVNRDDPIQLHLVYVQSRDAIISGSHPCSYEEAVQFGALQCQIQLGNHNPNLHKPGYLKIKEYFPPSFHKKKDAEKDIYKEFRKLTGMSESNSKFRYVQLCRSLKTYGITFFLTKERVKGQKKPVPKLLGITRDSILRLDAETKEVEHEYPLNHLRRWAASPQSFTLDFGDYEDDYVSVITTEGEAISQLLSGYIEILMKKRKDTGTVIDENETDIANVESVGRIRGQTSQATTSSSLSGYDGNGGREGQYSAPGQAIGYRGGLGGPLSIKVTNIDSASAAVANLLNEMELDPNAVIGQKSSLTPQQWRQQLAIHAKAVAAAAGKLLGNLNNPNGMDKNQMDSNARDVALTIDQLVHAARAASIASGEDPDGEMPLFDGAKAVAESISKLLKATKDLSSNPNDENARNLIAQAADQLKLMTSYLDGACNGVITDSGTLRLLMEAGKAIAIATQDLVNQANVAIQDINDPIRKNQLNMAIDETMKAGIHASAVSQALAATILDPNCRQQFNTAAKTAQDTNNYLLSAAKAAQMDPALLEKLRASAKSIAEAYASLIQSADLAQPKSGDDVEFTSASKTILSAAAQLLGSQGKSDNIMQQAKVIEEAMGHLIAGARRAALKTDDPGVRDRLIQCSKAVAEAVRNLMEIAQDSADNPEDKVLFAKLQESSKRVATAVKQLVGDAGKESAFQLLRTNAKLACAATTGLMNTSRQSMLQGHLSDQESNKLLLACVQAGPAITNLLNSITSSQKAPNDLPAQNQLIEVARVSAPIAYQVVAVAKGAIPHFTDQHSKQEVSNSSNTASDAIRALLDAIGDLTSAVGQQEFDDALDTVQALEADMESSTMLVQAGTTHQIPGQTRENALELLNVAARALGSSAKQVLLQYKTSPEKLGETSKDLATSVSQVTNAAKSVCFTTQNRSVQKAVLGAAKQITTESTNLVSCARAVSSNPGDPSLESALQSSVKAIAEALANLLTTSKGGDPGGKDLDDAIEAIKNDTKRINNPPVNLGGEGGVNSEKAISSSKALVGAVSQVAANARSNPSALGASARTTSTTFTLLVDTINLCTGTIVNKQLAIEIVKGGQLLGIETIKLLQASRFAASRPGEGEGELNQTQQSVSNTVKQLIYNIQSSVPGQAEIADALEIVKQAIIALNSSESSGSRPNALESLTQAAKNLADYTAQVVQSKGNSEKMGTQCKSASESLKDVVEYTKASLSTAEGHPDSIKTLASKVDDSSNALFNSCKKTGQLSDQDKKNAALDAKNLALSVPNLMGAAKKISASLVQSNPEKSKDILLVAQNITIATSKLVNIAKSVASGQSQADVSQLAATKKEVSELISKLLNATNGHDQDATTISIDLDSLSKSEQALLDASRSTANYMSQFMAIGKTISTGTKDPNVHQQFSGAAQNVSSGVQQLLSAINGMKPEQKDLDESIEIIQNAVVDLDSATLNAAIGLLENTAPVGKTAQVCQEELVDISRELATSMKTFLAAPKQDPTNLGQSAKDTANILPKIVNISKQLASLTTNPDIKQTQLLLSKKLADNMLELMISAKSGDVSDSKQAFNASQSIADILTSVKGGVMQSRDCDESIQIIGKSKENLQKPANDTHGKTYQQYRDEMTEIAKQLALGVSQLANSAKSKPEEIGSSSLKIASIIPRLAETARSTAAATNDVAAKKKLIDSTTGIIDATSNIISDAKLASADHKNTQLQQKISNNFKDITTQIANLIAALRAGATADRDIENACNEVNHVTTDLDAASLFAAAGQIDIDTDGHTTQNIQEQVGKLAQDLKDSKNQLAEASGKTIEDVGTSAKATASINQKLAHATKVCAALTSDSTTQQNLLSAARTVSSNLQQTISASKNAQKNPNAGNKAILDKSSQELEESIDSLANLVQSSTTTKGISELEGVSSEIRKQLAAYDSATANVNANATAEDVVNSAKNLAESIAYLVSSCNNSPEDIAEASKGTTLAIKSLLANAKGASVLTDDAVIQQNVTESAKAAAQTVLKLIQAAKQQRNDPSNPAHQNKLSEISSEVVESISTCVNAAEDLPEGKRAKLLFAAGESLEETAEKELKAAAAIIEEATAALLNAKKKREQNRIASGIDEAGIDESILEAARAITSATGVLVQCATNVQHELVLAGKVGNKGNMYRRDPTWARGLISAAQAVAGSVQGLVHSANSSSQGKVDEEQLVASAKGVAAATARLVTASRAKADLNSASNSQLAQAAKQVSNATAALVEAAKQVNEEPEVEFDTTNLSNAQIISKEMDQQIQILKLKKELEQAEKKLFSIRKKEYSDQTGNPSPAKDSDNKPTTSISVGITPTKRTTQASPPSPPLTPTQQAAGTPTLPPRPLMKKPAPSQAPSSPVAPVSAPVSKPSPKPAPKPAAPTAAAPNKTYTLEELKKKPANIDHSNLEIYLSDEEFKAVFNCERSELAAMPTWKRNNIKTKLGLF.

The region spanning arginine 85–arginine 369 is the FERM domain. Positions arginine 393–proline 421 are disordered. Over residues glutamine 395–serine 406 the composition is skewed to low complexity. 2 coiled-coil regions span residues threonine 1938–lysine 1965 and asparagine 2033–serine 2057. Positions leucine 2219 to glutamine 2460 constitute an I/LWEQ domain. Positions lysine 2454–lysine 2557 are disordered. Residues lysine 2473–arginine 2487 are compositionally biased toward polar residues. Positions lysine 2517 to serine 2537 are enriched in low complexity. Over residues lysine 2538 to alanine 2548 the composition is skewed to pro residues. Residues alanine 2553–phenylalanine 2614 form the HP domain.

It localises to the cytoplasm. The protein resides in the cytoskeleton. The protein localises to the cell cortex. Actin-binding protein required for multicellular morphogenesis. Substrate of pkgB and/or pkbA. The polypeptide is Talin-B (talB) (Dictyostelium discoideum (Social amoeba)).